Consider the following 96-residue polypeptide: Sec-independent protein translocase protein TatA (96 aa).

The helical transmembrane segment at 1-21 (MGFSSIWHWIIVLVVVLLLFG) threads the bilayer. Residues 42-96 (GMADDEDDEAASVSAERRGIEDGKPAQTIYPPQQPQQPQQPPQQPPVHRDDAPRG) are disordered. Over residues 56-65 (AERRGIEDGK) the composition is skewed to basic and acidic residues. The segment covering 73–86 (PQQPQQPQQPPQQP) has biased composition (pro residues).

This sequence belongs to the TatA/E family. As to quaternary structure, the Tat system comprises two distinct complexes: a TatABC complex, containing multiple copies of TatA, TatB and TatC subunits, and a separate TatA complex, containing only TatA subunits. Substrates initially bind to the TatABC complex, which probably triggers association of the separate TatA complex to form the active translocon.

Its subcellular location is the cell inner membrane. Part of the twin-arginine translocation (Tat) system that transports large folded proteins containing a characteristic twin-arginine motif in their signal peptide across membranes. TatA could form the protein-conducting channel of the Tat system. The protein is Sec-independent protein translocase protein TatA of Rhodospirillum rubrum (strain ATCC 11170 / ATH 1.1.1 / DSM 467 / LMG 4362 / NCIMB 8255 / S1).